A 395-amino-acid chain; its full sequence is Teichoic acid D-alanyltransferase (395 aa).

Residues 1-6 (MTPYSS) lie on the Extracellular side of the membrane. The helical transmembrane segment at 7–26 (FLFFILLGILLLPTIILGLN) threads the bilayer. Residues 27-30 (GKRF) lie on the Cytoplasmic side of the membrane. A helical transmembrane segment spans residues 31–46 (QAYNMFISIIILALIF). Residues 47–50 (SHDL) lie on the Extracellular side of the membrane. The helical transmembrane segment at 51–76 (HGVIALCLFTIWQVLLISGYLAYRQK) threads the bilayer. The Cytoplasmic segment spans residues 77-79 (ANS). Residues 80–104 (GFVFCGAVIASILPLFLSKIWPFLS) form a helical membrane-spanning segment. Residues 105–120 (HPQPHHPPHNLISFLG) are Extracellular-facing. The chain crosses the membrane as a helical span at residues 121-137 (ISYLTFKGVQLIMEARD). Residues 138–145 (GLLKEQLP) are Cytoplasmic-facing. Residues 146-175 (LHRLLYFILFFPTISSGPIDRYRRFVKDEQ) lie within the membrane without spanning it. The Cytoplasmic segment spans residues 176–179 (KAWT). The chain crosses the membrane as a helical span at residues 180–223 (KEEYADLLYTGIHKIFIGFLYKFIIGYAINTYFIMNLPAITHNK). Residue Ile224 is a topological domain, extracellular. Residues 225–256 (LGNLLYMYGYSMYLFFDFAGYTMFAVGVSYIM) form a helical membrane-spanning segment. At 257–266 (GIKSPENFNK) the chain is on the cytoplasmic side. The stretch at 267–303 (PFISKNIKDFWNRWHMSLSFWFRDYVFMRFVFWMTKK) is an intramembrane region. Topologically, residues 304 to 308 (KWIKN) are cytoplasmic. The chain crosses the membrane as a helical span at residues 309–328 (RMAVSNIGYFLLFMLMGVWH). The active site involves His328. The Extracellular portion of the chain corresponds to 329-333 (GLAPQ). Residues 334–351 (YIIYGLYHAVLMTCYNFF) form a helical membrane-spanning segment. The Cytoplasmic segment spans residues 352–364 (EKWNKKYKWLPSN). Residues 365-387 (RWTTILAIVITFHFVCFGFYIFS) traverse the membrane as a helical segment. The Extracellular portion of the chain corresponds to 388 to 395 (GKPFHHHH).

It belongs to the membrane-bound acyltransferase family.

It localises to the cell membrane. It participates in cell wall biogenesis; lipoteichoic acid biosynthesis. In terms of biological role, O-acyltransferase that catalyzes D-alanylation of both teichoic acid and lipoteichoic acid (LTA). D-alanylation of LTA plays an important role in modulating the properties of the cell wall in Gram-positive bacteria, influencing the net charge of the cell wall. Catalyzes D-alanylation from DltC carrier protein. This chain is Teichoic acid D-alanyltransferase, found in Bacillus subtilis (strain 168).